The following is a 342-amino-acid chain: GTPase Obg (342 aa).

One can recognise an Obg domain in the interval 1-159 (MQFIDRAEIE…RHLRLELKLL (159 aa)). Positions 160 to 328 (AEVGIIGLPN…LLAKVWQQLE (169 aa)) constitute an OBG-type G domain. GTP-binding positions include 166–173 (GLPNAGKS), 191–195 (FTTLI), 213–216 (DIPG), 280–283 (NKID), and 309–311 (SAV). Serine 173 and threonine 193 together coordinate Mg(2+).

It belongs to the TRAFAC class OBG-HflX-like GTPase superfamily. OBG GTPase family. As to quaternary structure, monomer. Requires Mg(2+) as cofactor.

The protein localises to the cytoplasm. In terms of biological role, an essential GTPase which binds GTP, GDP and possibly (p)ppGpp with moderate affinity, with high nucleotide exchange rates and a fairly low GTP hydrolysis rate. Plays a role in control of the cell cycle, stress response, ribosome biogenesis and in those bacteria that undergo differentiation, in morphogenesis control. This is GTPase Obg from Microcystis aeruginosa (strain NIES-843 / IAM M-2473).